Consider the following 550-residue polypeptide: Arginine--tRNA ligase (550 aa).

The short motif at 130–140 (ANPTGPIHIGG) is the 'HIGH' region element.

The protein belongs to the class-I aminoacyl-tRNA synthetase family. In terms of assembly, monomer.

Its subcellular location is the cytoplasm. It carries out the reaction tRNA(Arg) + L-arginine + ATP = L-arginyl-tRNA(Arg) + AMP + diphosphate. The protein is Arginine--tRNA ligase of Mycobacterium ulcerans (strain Agy99).